A 356-amino-acid polypeptide reads, in one-letter code: NADH dehydrogenase (ubiquinone) complex I, assembly factor 6 homolog (356 aa).

A mitochondrion-targeting transit peptide spans 1–41 (MIRNSGRILFNSLKNSNVKLINRNVIINSNIRLFSTSTNNT).

It belongs to the NDUFAF6 family.

It localises to the mitochondrion inner membrane. In terms of biological role, involved in the assembly of mitochondrial NADH:ubiquinone oxidoreductase complex (complex I) at early stages. The sequence is that of NADH dehydrogenase (ubiquinone) complex I, assembly factor 6 homolog from Dictyostelium discoideum (Social amoeba).